Here is a 303-residue protein sequence, read N- to C-terminus: HTH-type transcriptional regulator YjiE (303 aa).

Positions 11–68 (IETKWLYDFLTLEKCRNFSQAAVSRNVSQPAFSRRIRALEQAIGVELFNRQVTPLQLS) constitute an HTH lysR-type domain. Residues 28–47 (FSQAAVSRNVSQPAFSRRIR) constitute a DNA-binding region (H-T-H motif).

This sequence belongs to the LysR transcriptional regulatory family. Forms dimers, tetramers and possibly dodecameric complexes; oligomerization may be governed by cellular concentrations. DNA-binding seems to decrease oligomerization.

Its function is as follows. Protects cells from HOCl (hypochlorite) stress but not peroxide or diamide stress. Decreases the intracellular load of reactive oxygen species by up-regulating genes involved in methionine and cysteine biosynthesis and down-regulating Fur-regulated genes involved in iron acquisition. Has also been suggested to down-regulate expression of the flagellar regulon, decreasing motility, but this activity was not confirmed in a second study. The sequence is that of HTH-type transcriptional regulator YjiE (yjiE) from Escherichia coli (strain K12).